We begin with the raw amino-acid sequence, 93 residues long: Integration host factor subunit beta (93 aa).

Belongs to the bacterial histone-like protein family. In terms of assembly, heterodimer of an alpha and a beta chain.

Functionally, this protein is one of the two subunits of integration host factor, a specific DNA-binding protein that functions in genetic recombination as well as in transcriptional and translational control. This chain is Integration host factor subunit beta, found in Cereibacter sphaeroides (strain KD131 / KCTC 12085) (Rhodobacter sphaeroides).